Here is a 695-residue protein sequence, read N- to C-terminus: Adhesion G protein-coupled receptor F4 (695 aa).

An N-terminal signal peptide occupies residues 1–21; that stretch reads MKMKSQATMICCLVFFLSTEC. Topologically, residues 22 to 406 are extracellular; sequence SHYRSKIHLK…TDKVLDYITC (385 aa). Residues Asn-61, Asn-169, Asn-177, Asn-209, Asn-229, Asn-250, Asn-257, Asn-263, Asn-264, Asn-286, Asn-309, and Asn-340 are each glycosylated (N-linked (GlcNAc...) asparagine). One can recognise a GAIN-B domain in the interval 249–397; sequence HNTSEKSLNF…SILMSSKSMT (149 aa). 2 cysteine pairs are disulfide-bonded: Cys-349–Cys-376 and Cys-364–Cys-378. The tract at residues 349–397 is GPS; that stretch reads CVGWHSKKRRWDEKACQMMLDIRNEVKCRCNYTSVVMSFSILMSSKSMT. A glycan (N-linked (GlcNAc...) asparagine) is linked at Asn-379. Residues 407–427 traverse the membrane as a helical segment; sequence IGLSVSILSLVLCLIIEATVW. Residues 428–440 are Cytoplasmic-facing; the sequence is SRVVVTEISYMRH. A helical membrane pass occupies residues 441 to 461; the sequence is VCIVNIAVSLLTANVWFIIGS. The Extracellular portion of the chain corresponds to 462 to 485; sequence HFNIKAQDYNMCVAVTFFSHFFYL. A helical transmembrane segment spans residues 486-506; it reads SLFFWMLFKALLIIYGILVIF. Topologically, residues 507-515 are cytoplasmic; sequence RRMMKSRMM. A helical membrane pass occupies residues 516 to 536; the sequence is VIGFAIGYGCPLIIAVTTVAI. At 537 to 561 the chain is on the extracellular side; that stretch reads TEPEKGYMRPEACWLNWDNTKALLA. The helical transmembrane segment at 562 to 582 threads the bilayer; the sequence is FAIPAFVIVAVNLIVVLVVAV. Residues 583–606 lie on the Cytoplasmic side of the membrane; it reads NTQRPSIGSSKSQDVVIIMRISKN. A helical membrane pass occupies residues 607–627; the sequence is VAILTPLLGLTWGFGIATLIE. Over 628–634 the chain is Extracellular; that stretch reads GTSLTFH. The chain crosses the membrane as a helical span at residues 635 to 655; sequence IIFALLNAFQGFFILLFGTIM. At 656–695 the chain is on the cytoplasmic side; it reads DHKIRDALRMRMSSLKGKSRAAENASLGPTNGSKLMNRQG. The tract at residues 674-695 is disordered; sequence SRAAENASLGPTNGSKLMNRQG. The segment covering 682–695 has biased composition (polar residues); that stretch reads LGPTNGSKLMNRQG.

This sequence belongs to the G-protein coupled receptor 2 family. Adhesion G-protein coupled receptor (ADGR) subfamily.

The protein resides in the membrane. Its function is as follows. Orphan receptor. The polypeptide is Adhesion G protein-coupled receptor F4 (ADGRF4) (Homo sapiens (Human)).